The following is a 468-amino-acid chain: Ribosomal lysine N-methyltransferase 4 (468 aa).

The 281-residue stretch at 22 to 302 (EKIGLNDYRH…KGEQLWNTYG (281 aa)) folds into the SET domain. The segment at 188 to 225 (ISNENEKSAAETSIKEDKNGDAAKKNEGSANQDDEKLH) is disordered. Tyr-301 lines the S-adenosyl-L-methionine pocket.

This sequence belongs to the class V-like SAM-binding methyltransferase superfamily. Histone-lysine methyltransferase family. SETD6 subfamily.

It is found in the nucleus. S-adenosyl-L-methionine-dependent protein-lysine N-methyltransferase that monomethylates 60S ribosomal protein L42 (rpl42) at 'Lys-55'. This chain is Ribosomal lysine N-methyltransferase 4, found in Schizosaccharomyces pombe (strain 972 / ATCC 24843) (Fission yeast).